Here is a 309-residue protein sequence, read N- to C-terminus: Coenzyme PQQ synthesis protein B (309 aa).

This sequence belongs to the PqqB family.

Its pathway is cofactor biosynthesis; pyrroloquinoline quinone biosynthesis. Its function is as follows. May be involved in the transport of PQQ or its precursor to the periplasm. In Nitrosococcus oceani (strain ATCC 19707 / BCRC 17464 / JCM 30415 / NCIMB 11848 / C-107), this protein is Coenzyme PQQ synthesis protein B.